The following is an 865-amino-acid chain: FO synthase (865 aa).

Residues 1–21 (MIEGVTELATPNVPPAPPSPS) are disordered. Radical SAM core domains follow at residues 76–320 (ITYS…LGPD) and 544–785 (VTYV…DNIQ). A cofG-like region spans residues 77–409 (TYSRNVFIPL…PRIGAHVAAL (333 aa)). The [4Fe-4S] cluster site is built by cysteine 90, cysteine 94, cysteine 97, cysteine 558, cysteine 562, and cysteine 565. Residues 521–854 (DGAELDAVAA…RERTTVYGRV (334 aa)) are cofH-like.

It in the N-terminal section; belongs to the radical SAM superfamily. CofG family. This sequence in the C-terminal section; belongs to the radical SAM superfamily. CofH family. [4Fe-4S] cluster serves as cofactor.

It carries out the reaction 5-amino-6-(D-ribitylamino)uracil + L-tyrosine + S-adenosyl-L-methionine = 5-amino-5-(4-hydroxybenzyl)-6-(D-ribitylimino)-5,6-dihydrouracil + 2-iminoacetate + 5'-deoxyadenosine + L-methionine + H(+). The catalysed reaction is 5-amino-5-(4-hydroxybenzyl)-6-(D-ribitylimino)-5,6-dihydrouracil + S-adenosyl-L-methionine = 7,8-didemethyl-8-hydroxy-5-deazariboflavin + 5'-deoxyadenosine + L-methionine + NH4(+) + H(+). It participates in cofactor biosynthesis; coenzyme F0 biosynthesis. Its function is as follows. Catalyzes the radical-mediated synthesis of 7,8-didemethyl-8-hydroxy-5-deazariboflavin (FO) from 5-amino-6-(D-ribitylamino)uracil and L-tyrosine. The chain is FO synthase (fbiC) from Nocardia farcinica (strain IFM 10152).